The primary structure comprises 244 residues: MRFQTPLVPARLVRRYNRFLSDAVLEDTGEEVRAHCPNPGAMLGLKDAGQRIWLEPNDDPKKKLRYGWRLVELADGHMAGIDTSVPNKVVGEALAARAITELAAYGTIRAEVKYGTNSRVDFLATEPGLPDTYVEVKNVHLRRAEDWAEFPDSVTTRGAKHLAELARMVEAGHRAVMLYLVQRTDCTRLRLAPDLDPSYARAFDAARATGVEMLCYGTLIDTGGVTLGRALPVDPAAQAPQNED.

This sequence belongs to the SfsA family.

This is Sugar fermentation stimulation protein homolog from Dinoroseobacter shibae (strain DSM 16493 / NCIMB 14021 / DFL 12).